The sequence spans 217 residues: N-(5'-phosphoribosyl)anthranilate isomerase (217 aa).

Belongs to the TrpF family.

It carries out the reaction N-(5-phospho-beta-D-ribosyl)anthranilate = 1-(2-carboxyphenylamino)-1-deoxy-D-ribulose 5-phosphate. Its pathway is amino-acid biosynthesis; L-tryptophan biosynthesis; L-tryptophan from chorismate: step 3/5. The chain is N-(5'-phosphoribosyl)anthranilate isomerase from Bacillus velezensis (strain DSM 23117 / BGSC 10A6 / LMG 26770 / FZB42) (Bacillus amyloliquefaciens subsp. plantarum).